The chain runs to 150 residues: Large ribosomal subunit protein uL13 (150 aa).

The tract at residues 130–150 (EHPHGAQQPQPYQLNPSASIK) is disordered. Residues 136-150 (QQPQPYQLNPSASIK) show a composition bias toward polar residues.

It belongs to the universal ribosomal protein uL13 family. Part of the 50S ribosomal subunit.

Functionally, this protein is one of the early assembly proteins of the 50S ribosomal subunit, although it is not seen to bind rRNA by itself. It is important during the early stages of 50S assembly. This chain is Large ribosomal subunit protein uL13, found in Synechococcus sp. (strain RCC307).